The sequence spans 373 residues: 1-deoxy-D-xylulose 5-phosphate reductoisomerase (373 aa).

Positions 10, 11, 12, 13, 37, and 112 each coordinate NADPH. K113 lines the 1-deoxy-D-xylulose 5-phosphate pocket. Residue E114 participates in NADPH binding. Residue D134 coordinates Mn(2+). 4 residues coordinate 1-deoxy-D-xylulose 5-phosphate: S135, E136, S160, and H183. Mn(2+) is bound at residue E136. An NADPH-binding site is contributed by G189. S196, N201, K202, and E205 together coordinate 1-deoxy-D-xylulose 5-phosphate. Mn(2+) is bound at residue E205.

This sequence belongs to the DXR family. Requires Mg(2+) as cofactor. It depends on Mn(2+) as a cofactor.

It catalyses the reaction 2-C-methyl-D-erythritol 4-phosphate + NADP(+) = 1-deoxy-D-xylulose 5-phosphate + NADPH + H(+). Its pathway is isoprenoid biosynthesis; isopentenyl diphosphate biosynthesis via DXP pathway; isopentenyl diphosphate from 1-deoxy-D-xylulose 5-phosphate: step 1/6. Its function is as follows. Catalyzes the NADPH-dependent rearrangement and reduction of 1-deoxy-D-xylulose-5-phosphate (DXP) to 2-C-methyl-D-erythritol 4-phosphate (MEP). The protein is 1-deoxy-D-xylulose 5-phosphate reductoisomerase of Persephonella marina (strain DSM 14350 / EX-H1).